The chain runs to 209 residues: V-type ATP synthase subunit D (209 aa).

It belongs to the V-ATPase D subunit family.

Produces ATP from ADP in the presence of a proton gradient across the membrane. The sequence is that of V-type ATP synthase subunit D from Thermoanaerobacter pseudethanolicus (strain ATCC 33223 / 39E) (Clostridium thermohydrosulfuricum).